The chain runs to 119 residues: Transcription and mRNA export factor SUS1 (119 aa).

The protein belongs to the ENY2 family. Component of the nuclear pore complex (NPC)-associated TREX-2 complex (transcription and export complex 2), composed of at least SUS1, SAC3, THP1, SEM1, and CDC31. TREX-2 contains 2 SUS1 chains. The TREX-2 complex interacts with the nucleoporin NUP1. Component of the 1.8 MDa SAGA transcription coactivator-HAT complex. SAGA is built of 5 distinct domains with specialized functions. Within the SAGA complex, SUS1, SGF11, SGF73 and UBP8 form an additional subcomplex of SAGA called the DUB module (deubiquitination module). Interacts directly with THP1, SAC3, SGF11, and with the RNA polymerase II.

The protein localises to the nucleus. It localises to the nucleoplasm. It is found in the cytoplasm. The protein resides in the P-body. Functionally, involved in mRNA export coupled transcription activation by association with both the TREX-2 and the SAGA complexes. At the promoters, SAGA is required for recruitment of the basal transcription machinery. It influences RNA polymerase II transcriptional activity through different activities such as TBP interaction and promoter selectivity, interaction with transcription activators, and chromatin modification through histone acetylation and deubiquitination. Within the SAGA complex, participates in a subcomplex required for deubiquitination of H2B and for the maintenance of steady-state H3 methylation levels. The TREX-2 complex functions in docking export-competent ribonucleoprotein particles (mRNPs) to the nuclear entrance of the nuclear pore complex (nuclear basket). TREX-2 participates in mRNA export and accurate chromatin positioning in the nucleus by tethering genes to the nuclear periphery. May also be involved in cytoplasmic mRNA decay by interaction with components of P-bodies. This Candida albicans (strain SC5314 / ATCC MYA-2876) (Yeast) protein is Transcription and mRNA export factor SUS1.